A 626-amino-acid polypeptide reads, in one-letter code: Chaperone protein HtpG (626 aa).

Residues 1 to 331 form an a; substrate-binding region; sequence MSETVERHEF…TDDLPLNVSR (331 aa). Residues 332–544 are b; it reads EMLQSTPTLQ…GMGPDLQMQR (213 aa). The interval 545–626 is c; sequence LLRRAGRGFG…GTAAKPAGSA (82 aa).

Belongs to the heat shock protein 90 family. As to quaternary structure, homodimer.

Its subcellular location is the cytoplasm. In terms of biological role, molecular chaperone. Has ATPase activity. The sequence is that of Chaperone protein HtpG from Methylorubrum extorquens (strain CM4 / NCIMB 13688) (Methylobacterium extorquens).